Consider the following 95-residue polypeptide: MKTLVLVAVLGLASLYLLSYASEVQQLSVAEEEFGALIDAFGGLLETEERGVNKEGCRKFLGGCENTGQCCLHLFCKYDTPFNHFCAWDLSFGRK.

A signal peptide spans Met-1–Ala-21. A propeptide spanning residues Ser-22–Arg-50 is cleaved from the precursor. 3 disulfide bridges follow: Cys-57–Cys-71, Cys-64–Cys-76, and Cys-70–Cys-86.

This sequence belongs to the neurotoxin 10 (Hwtx-1) family. 26 (ICK-1) subfamily. In terms of tissue distribution, expressed by the venom gland.

It localises to the secreted. Functionally, ion channel inhibitor. The protein is U8-barytoxin-Tl1a of Trittame loki (Brush-footed trapdoor spider).